A 579-amino-acid polypeptide reads, in one-letter code: MENLEQLQERVAVSDGRAKADLVIKNGRIINVFSGEIMDGDIAIKNGYIAGIGNFPDAEKIIDAAGAFIAPGFIDAHVHVESAMVTPAEFARVLLPNGVTTIVTDPHEIANVAGEKGIEFMLEDAKGVPIDMFVMLPSSVPATEGEHNGETLHAEKLHPLYRHEKVIGLAEVMDFPSVAKGSSDILTKIIDAKKEGGRIDGHGAGLTSADLNNYLAVGIRTDHESTTAKEATDRLRAGMFVMLREGTVGRDLLQTIPAVSEKNSHRFCFCTDDKLINDLITEGSINYNIRLAIKNGIDPITAIQMATINAANCHNLPYLGAVAAGYQADIVFLTDIETVEISKVLKNGEVVVDNGVRHEAAFKQQAAVPFVSPPINHHVSLQDLALPLTKETCYVIGMQPNSLFTEKRIEQVAIQDGKFVPTVENDLLKMAVVERHHDTGCVGLGIVKGFGLTEGAIATTVAHDSHNIVAVGISDEAMKAAIDHITQTGGGIAVVNGAGQVLHDLALPIAGLLSDKSYEEVENDLAGLLNAFKQISTADGFDPFLTLSFLTLPVIPELKLTDQGLFDFATFQIISNEVN.

It belongs to the metallo-dependent hydrolases superfamily. Adenine deaminase family. Requires Mn(2+) as cofactor.

It carries out the reaction adenine + H2O + H(+) = hypoxanthine + NH4(+). This is Adenine deaminase from Listeria monocytogenes serotype 4b (strain F2365).